Consider the following 896-residue polypeptide: Androgen receptor (896 aa).

The interval 1–534 (MEVQLGLGRV…PIDYYFPPQK (534 aa)) is modulating. The interaction with ZNF318 stretch occupies residues 1 to 563 (MEVQLGLGRV…GSCKVFFKRA (563 aa)). 2 disordered regions span residues 35–152 (QNPG…LSLL) and 178–218 (LLQQ…YLGG). The segment covering 54–78 (LQQQQLQQQETSPRRQQQQQQQPSE) has biased composition (low complexity). Phosphoserine; by CDK9 is present on S65. The residue at position 81 (S81) is a Phosphoserine. Low complexity predominate over residues 178–189 (LLQQQQQQQQQQ). Over residues 190–199 (EAVSEGNSSG) the composition is skewed to polar residues. Y215 bears the Phosphotyrosine; by CSK mark. At S248 the chain carries Phosphoserine. Y259 bears the Phosphotyrosine; by CSK and TNK2 mark. 4 positions are modified to phosphotyrosine; by CSK: Y299, Y338, Y349, and Y354. Y355 bears the Phosphotyrosine; by CSK and TNK2 mark. Residue K378 forms a Glycyl lysine isopeptide (Lys-Gly) (interchain with G-Cter in SUMO) linkage. Position 385 is a phosphotyrosine; by CSK (Y385). K497 participates in a covalent cross-link: Glycyl lysine isopeptide (Lys-Gly) (interchain with G-Cter in SUMO). Y511 and Y528 each carry phosphotyrosine; by CSK. Residues 528 to 895 (YYFPPQKTCL…GKVKPIYFHT (368 aa)) form an interaction with LPXN region. A DNA-binding region (nuclear receptor) is located at residues 535 to 608 (TCLICGDEAS…AGMTLGARKL (74 aa)). NR C4-type zinc fingers lie at residues 536-556 (CLIC…CGSC) and 572-596 (CASR…LRKC). The segment at 548–638 (YGALTCGSCK…TEEPAQKLTV (91 aa)) is interaction with HIPK3. The segment at 568 to 895 (QKYLCASRND…GKVKPIYFHT (328 aa)) is interaction with CCAR1. Residues 601-895 (MTLGARKLKK…GKVKPIYFHT (295 aa)) form an interaction with KAT7 region. S627 is modified (phosphoserine; by STK4/MST1). The NR LBD domain occupies 645–876 (ECQPIFLNVL…DFPEMMAEII (232 aa)). Residues N682 and R729 each coordinate 17beta-hydroxy-5alpha-androstan-3-one. Residues K822 and K824 each participate in a glycyl lysine isopeptide (Lys-Gly) (interchain with G-Cter in ubiquitin) cross-link. Residue T854 coordinates 17beta-hydroxy-5alpha-androstan-3-one. The residue at position 892 (Y892) is a Phosphotyrosine; by CSK.

This sequence belongs to the nuclear hormone receptor family. NR3 subfamily. As to quaternary structure, binds DNA as a homodimer. Part of a ternary complex containing AR, EFCAB6/DJBP and PARK7. Interacts with HIPK3 and NR0B2 in the presence of androgen. The ligand binding domain interacts with KAT7/HBO1 in the presence of dihydrotestosterone. Interacts with EFCAB6/DJBP, PQBP1, RANBP9, RBAK, SPDEF, SRA1, TGFB1I1 and RREB1. Interacts with ZMIZ1/ZIMP10 and ZMIZ2/ZMIP7 which both enhance its transactivation activity. Interacts with SLC30A9 and RAD54L2/ARIP4. Interacts with MACROD1 (via macro domain). Interacts via the ligand-binding domain with LXXLL and FXXLF motifs from NCOA1, NCOA2, NCOA3 and MAGEA11. Interacts (via nuclear receptor DNA binding domain and nuclear receptor ligand binding domain) with NCOA4. The AR N-terminal poly-Gln region binds Ran resulting in enhancement of AR-mediated transactivation. Ran-binding decreases as the poly-Gln length increases. Interacts with HIP1 (via coiled coil domain). Interacts (via ligand-binding domain) with TRIM68. Interacts with TNK2. Interacts with USP26. Interacts with RNF6. Interacts (regulated by RNF6 probably through polyubiquitination) with RNF14; regulates AR transcriptional activity. Interacts with PRMT2 and TRIM24. Interacts with RACK1. Interacts with RANBP10; this interaction enhances dihydrotestosterone-induced AR transcriptional activity. Interacts with PRPF6 in a hormone-independent way; this interaction enhances dihydrotestosterone-induced AR transcriptional activity. Interacts with STK4/MST1. Interacts with ZIPK/DAPK3. Interacts with LPXN. Interacts with MAK. Part of a complex containing AR, MAK and NCOA3. Interacts with CRY1. Interacts with CCAR1 and GATA2. Interacts with ZNF318. Interacts with BUD31. Interacts with ARID4A. Interacts with ARID4B. Interacts (via NR LBD domain) with ZBTB7A; the interaction is direct and androgen-dependent. Interacts with NCOR1. Interacts with NCOR2. Interacts with CRY2 in a ligand-dependent manner. In terms of processing, phosphorylated in prostate cancer cells in response to several growth factors including EGF. Phosphorylation is induced by c-Src kinase (CSK). Tyr-511 is one of the major phosphorylation sites and an increase in phosphorylation and Src kinase activity is associated with prostate cancer progression. Phosphorylation by TNK2 enhances the DNA-binding and transcriptional activity. Phosphorylation at Ser-65 by CDK9 regulates AR promoter selectivity and cell growth. Post-translationally, sumoylated on Lys-378 (major) and Lys-497. Ubiquitinated. Deubiquitinated by USP26. 'Lys-6' and 'Lys-27'-linked polyubiquitination by RNF6 modulates AR transcriptional activity and specificity. Palmitoylated by ZDHHC7 and ZDHHC21. Palmitoylation is required for plasma membrane targeting and for rapid intracellular signaling via ERK and AKT kinases and cAMP generation.

It is found in the nucleus. Its subcellular location is the cytoplasm. In terms of biological role, steroid hormone receptors are ligand-activated transcription factors that regulate eukaryotic gene expression and affect cellular proliferation and differentiation in target tissues. Transcription factor activity is modulated by bound coactivator and corepressor proteins like ZBTB7A that recruits NCOR1 and NCOR2 to the androgen response elements/ARE on target genes, negatively regulating androgen receptor signaling and androgen-induced cell proliferation. Transcription activation is also down-regulated by NR0B2. Activated, but not phosphorylated, by HIPK3 and ZIPK/DAPK3. This Sus scrofa (Pig) protein is Androgen receptor (AR).